A 150-amino-acid chain; its full sequence is Ribosomal RNA large subunit methyltransferase H (150 aa).

Residues Leu68, Gly97, and 116 to 121 (LSAMTL) contribute to the S-adenosyl-L-methionine site.

This sequence belongs to the RNA methyltransferase RlmH family. Homodimer.

Its subcellular location is the cytoplasm. It catalyses the reaction pseudouridine(1915) in 23S rRNA + S-adenosyl-L-methionine = N(3)-methylpseudouridine(1915) in 23S rRNA + S-adenosyl-L-homocysteine + H(+). In terms of biological role, specifically methylates the pseudouridine at position 1915 (m3Psi1915) in 23S rRNA. This chain is Ribosomal RNA large subunit methyltransferase H, found in Prochlorococcus marinus (strain MIT 9303).